A 262-amino-acid polypeptide reads, in one-letter code: Type III pantothenate kinase (262 aa).

9–16 (DAGNSRIK) contacts ATP. Residues Tyr96 and 103 to 106 (GSDR) contribute to the substrate site. Asp105 functions as the Proton acceptor in the catalytic mechanism. Thr129 contributes to the ATP binding site. Thr189 is a binding site for substrate.

It belongs to the type III pantothenate kinase family. As to quaternary structure, homodimer. NH4(+) is required as a cofactor. The cofactor is K(+).

Its subcellular location is the cytoplasm. The enzyme catalyses (R)-pantothenate + ATP = (R)-4'-phosphopantothenate + ADP + H(+). Its pathway is cofactor biosynthesis; coenzyme A biosynthesis; CoA from (R)-pantothenate: step 1/5. Catalyzes the phosphorylation of pantothenate (Pan), the first step in CoA biosynthesis. This is Type III pantothenate kinase from Burkholderia vietnamiensis (strain G4 / LMG 22486) (Burkholderia cepacia (strain R1808)).